The primary structure comprises 69 residues: Probable rubredoxin HupI (69 aa).

Residues 16–67 (VTRLECGICWTVYDPADGDDVAQIAPGTPFAALPEEWHCPNCDAPKSKFMAI) form the Rubredoxin-like domain. Fe cation-binding residues include cysteine 21, cysteine 24, cysteine 54, and cysteine 57.

This sequence belongs to the rubredoxin family. The cofactor is Fe(3+).

Functionally, could be an electron transport intermediate in hydrogen oxidation. This Bradyrhizobium diazoefficiens (strain JCM 10833 / BCRC 13528 / IAM 13628 / NBRC 14792 / USDA 110) protein is Probable rubredoxin HupI (hupI).